The sequence spans 276 residues: MNKKRLLPKASLGALFMLFGTALTACSNSDFQTNLTSLNQLREGVNQNTSLTQDKKAFVESLQKAFENNPEGTTKVLLDAWKFTLLDSKILESKDPSRFVKAFGSGKSNEDVEPNASVKGLRLDKRFEPSTANIINNVISLNEQKVEAFNIQYKSRTSFKVQVKLNAQGKYQKSQVQSYLQQIGLNDGDLKQESGTLSADLIFTYTVPESNLFSRKNFDTLMKKINFNTTLKIDMVGKDEIMKKILQSTTFTNNLSSQTFQDQSIDLLPYLLYSIL.

An N-terminal signal peptide occupies residues 1–25 (MNKKRLLPKASLGALFMLFGTALTA). A lipid anchor (N-palmitoyl cysteine) is attached at Cys26. Cys26 carries S-diacylglycerol cysteine lipidation.

The protein belongs to the MG439/MG440 family.

The protein resides in the cell membrane. This is an uncharacterized protein from Mycoplasma pneumoniae (strain ATCC 29342 / M129 / Subtype 1) (Mycoplasmoides pneumoniae).